We begin with the raw amino-acid sequence, 361 residues long: 5-formaminoimidazole-4-carboxamide-1-(beta)-D-ribofuranosyl 5'-monophosphate synthetase (361 aa).

5-amino-1-(5-phospho-beta-D-ribosyl)imidazole-4-carboxamide contacts are provided by His27 and Ser94. The 233-residue stretch at 116–348 folds into the ATP-grasp domain; that stretch reads RAILRWEAER…MGQRIAKEIK (233 aa). ATP contacts are provided by residues 146–208 and Glu230; that span reads PDEI…ANYC. Residue Asn258 participates in 5-amino-1-(5-phospho-beta-D-ribosyl)imidazole-4-carboxamide binding. The Mg(2+) site is built by Gln297 and Glu310.

The protein belongs to the phosphohexose mutase family. The cofactor is Mg(2+). Mn(2+) is required as a cofactor.

It catalyses the reaction 5-amino-1-(5-phospho-beta-D-ribosyl)imidazole-4-carboxamide + formate + ATP = 5-formamido-1-(5-phospho-D-ribosyl)imidazole-4-carboxamide + ADP + phosphate. Its pathway is purine metabolism; IMP biosynthesis via de novo pathway; 5-formamido-1-(5-phospho-D-ribosyl)imidazole-4-carboxamide from 5-amino-1-(5-phospho-D-ribosyl)imidazole-4-carboxamide (formate route): step 1/1. Catalyzes the ATP- and formate-dependent formylation of 5-aminoimidazole-4-carboxamide-1-beta-d-ribofuranosyl 5'-monophosphate (AICAR) to 5-formaminoimidazole-4-carboxamide-1-beta-d-ribofuranosyl 5'-monophosphate (FAICAR) in the absence of folates. The protein is 5-formaminoimidazole-4-carboxamide-1-(beta)-D-ribofuranosyl 5'-monophosphate synthetase of Methanococcus maripaludis (strain DSM 14266 / JCM 13030 / NBRC 101832 / S2 / LL).